Reading from the N-terminus, the 251-residue chain is Probable transcriptional regulatory protein cbdbA400 (251 aa).

Belongs to the TACO1 family.

It localises to the cytoplasm. The polypeptide is Probable transcriptional regulatory protein cbdbA400 (Dehalococcoides mccartyi (strain CBDB1)).